A 93-amino-acid chain; its full sequence is Parbolysin P3 (93 aa).

Cystine bridges form between Cys16/Cys37, Cys22/Cys33, and Cys47/Cys60.

The protein belongs to the worm cytolysin family. Localized within the skin and proboscis and are most readily isolated from body mucus secretions.

It is found in the secreted. Cytolysin that shows hemolytic activity (on bovine erythrocytes, HC(50)=5.75 mg/ml). This hemolytic activity is completely inhibited by small unilamelar vesicles composed of PC/PG, PC/PI and PC/PS in 1:1 molar ratios (with at least 100 mg/ml concentration). This chain is Parbolysin P3, found in Parborlasia corrugatus (Antarctic nemertean worm).